Here is a 275-residue protein sequence, read N- to C-terminus: Putative replication protein (275 aa).

The BRCT domain occupies 98–198 (SKAICFTPYD…RILKISEDYF (101 aa)).

The chain is Putative replication protein from Wigglesworthia glossinidia brevipalpis.